A 447-amino-acid chain; its full sequence is NADP-specific glutamate dehydrogenase (447 aa).

Lys92, Gln113, and Lys116 together coordinate substrate. Lys128 acts as the Proton donor in catalysis. Gly167 lines the substrate pocket. 2 residues coordinate NADP(+): Thr211 and Asn242. Ser380 contacts substrate.

It belongs to the Glu/Leu/Phe/Val dehydrogenases family. As to quaternary structure, homohexamer.

The catalysed reaction is L-glutamate + NADP(+) + H2O = 2-oxoglutarate + NH4(+) + NADPH + H(+). With respect to regulation, competitively inhibited by homoserine and by glutamine. Its function is as follows. Catalyzes the reversible oxidative deamination of glutamate to alpha-ketoglutarate and ammonia. The protein is NADP-specific glutamate dehydrogenase of Escherichia coli (strain K12).